A 713-amino-acid chain; its full sequence is DNA polymerase eta (713 aa).

The 251-residue stretch at 9 to 259 (VALVDMDCFF…MPIRKIRSLG (251 aa)) folds into the UmuC domain. 2 residues coordinate Mg(2+): D13 and M14. Mn(2+) is bound by residues D13 and M14. Residue R61 coordinates a 2'-deoxyribonucleoside 5'-triphosphate. Residues D115 and E116 each contribute to the Mg(2+) site. D115 and E116 together coordinate Mn(2+). Disordered stretches follow at residues 441–472 (TSFL…AVTA) and 495–527 (EASL…QSTG). Polar residues-rich tracts occupy residues 456 to 466 (VTSSEAKTQGS) and 497 to 527 (SLSS…QSTG). The segment at 628 to 662 (AAEDQVPCEKCGSLVPVWDMPEHMDYHFALELQKS) adopts a UBZ3-type zinc-finger fold. Residues C635, C638, H650, and H654 each contribute to the Zn(2+) site. Residues 677 to 705 (VSHQGKRNPKSPLACTNKRPRPEGMQTLE) are disordered. Residues K682, K686, and K694 each participate in a glycyl lysine isopeptide (Lys-Gly) (interchain with G-Cter in ubiquitin) cross-link. The PIP-box signature appears at 701-708 (MQTLESFF). Residue K709 forms a Glycyl lysine isopeptide (Lys-Gly) (interchain with G-Cter in ubiquitin) linkage.

It belongs to the DNA polymerase type-Y family. Interacts with REV1. Interacts with monoubiquitinated PCNA, but not unmodified PCNA. Interacts with POLI; this interaction targets POLI to the replication machinery. Interacts with PALB2 and BRCA2; the interactions are direct and are required to sustain the recruitment of POLH at blocked replication forks and to stimulate POLH-dependent DNA synthesis on D loop substrates. Interacts (via C-terminus) with TRAIP. Interacts with ubiquitin. Interacts with POLDIP2. Mg(2+) serves as cofactor. It depends on Mn(2+) as a cofactor. Post-translationally, monoubiquitinated by RCHY1/PIRH2. Ubiquitination depends on integrity of the UBZ3-type zinc finger domain and is enhanced by TRAIP. Ubiquitination inhibits the ability of PolH to interact with PCNA and to bypass UV-induced lesions.

The protein localises to the nucleus. It carries out the reaction DNA(n) + a 2'-deoxyribonucleoside 5'-triphosphate = DNA(n+1) + diphosphate. With respect to regulation, the enzyme in complex with the DNA substrate binds a third divalent metal cation. The binding of this third divalent cation, which is coordinated by water molecules and two oxygen atoms from DNA and dNTP, is essential for catalyzing the DNA synthesis. In terms of biological role, DNA polymerase specifically involved in the DNA repair by translesion synthesis (TLS). Due to low processivity on both damaged and normal DNA, cooperates with the heterotetrameric (REV3L, REV7, POLD2 and POLD3) POLZ complex for complete bypass of DNA lesions. Inserts one or 2 nucleotide(s) opposite the lesion, the primer is further extended by the tetrameric POLZ complex. In the case of 1,2-intrastrand d(GpG)-cisplatin cross-link, inserts dCTP opposite the 3' guanine. Particularly important for the repair of UV-induced pyrimidine dimers. Although inserts the correct base, may cause base transitions and transversions depending upon the context. May play a role in hypermutation at immunoglobulin genes. Forms a Schiff base with 5'-deoxyribose phosphate at abasic sites, but does not have any lyase activity, preventing the release of the 5'-deoxyribose phosphate (5'-dRP) residue. This covalent trapping of the enzyme by the 5'-dRP residue inhibits its DNA synthetic activity during base excision repair, thereby avoiding high incidence of mutagenesis. Targets POLI to replication foci. In Homo sapiens (Human), this protein is DNA polymerase eta (POLH).